A 374-amino-acid chain; its full sequence is Speckle-type POZ protein (374 aa).

One can recognise an MATH domain in the interval 31–161; it reads KFSYMWTINN…DDKLTLFCEV (131 aa). The required for nuclear localization stretch occupies residues 71–191; the sequence is VNPKGLDEES…PECRLADELG (121 aa). The tract at residues 123-133 is important for binding substrate proteins; sequence YRFVQGKDWGF. The 125-residue stretch at 173–297 folds into the BTB domain; it reads QNTMNMVKVP…MCEDALCSNL (125 aa). 2 important for homodimerization regions span residues 186 to 217 and 297 to 355; these read LADE…HKAI and LSVE…AYRS.

Belongs to the Tdpoz family. In terms of assembly, interacts with GLI2 and GLI3. Homodimer and homooligomer. Heterodimer with SPOPL. Each dimer interacts with two CUL3 molecules. Part of cullin-RING-based BCR (BTB-CUL3-RBX1) E3 ubiquitin-protein ligase complexes that contain CUL3 and homodimeric SPOP, or the heterodimer formed by SPOP and SPOPL, plus a target protein, such as MACROH2A1, PDX1/IPF1, BMI1, BRMS1 and DAXX. Interacts with IRF1; this interaction mediates IRF1 proteasomal degradation. Interacts with HNF1A.

The protein resides in the nucleus. It is found in the nucleus speckle. It functions in the pathway protein modification; protein ubiquitination. In terms of biological role, component of a cullin-RING-based BCR (BTB-CUL3-RBX1) E3 ubiquitin-protein ligase complex that mediates the ubiquitination of target proteins, leading most often to their proteasomal degradation. In complex with CUL3, involved in ubiquitination and proteasomal degradation of BRMS1, DAXX, PDX1/IPF1, GLI2 and GLI3. In complex with CUL3, involved in ubiquitination of MACROH2A1 and BMI1; this does not lead to their proteasomal degradation. Inhibits transcriptional activation of PDX1/IPF1 targets, such as insulin, by promoting PDX1/IPF1 degradation. The cullin-RING-based BCR (BTB-CUL3-RBX1) E3 ubiquitin-protein ligase complex containing homodimeric SPOP has higher ubiquitin ligase activity than the complex that contains the heterodimer formed by SPOP and SPOPL. Involved in the regulation of bromodomain and extra-terminal motif (BET) proteins BRD2, BRD3, BRD4 stability.Plays an essential role for proper translation, but not for their degradation, of critical DNA replication licensing factors CDT1 and CDC6, thereby participating in DNA synthesis and cell proliferation. Regulates interferon regulatory factor 1/IRF1 proteasomal turnover by targeting S/T-rich degrons in IRF1. Involved in ubiquitination of BRDT and promotes its degradation, thereby regulates histone removal in early condensing spermatids prior to histone-to-protamine exchange. This chain is Speckle-type POZ protein (SPOP), found in Bos taurus (Bovine).